The sequence spans 74 residues: Protein SlyX homolog (74 aa).

It belongs to the SlyX family.

This Neisseria meningitidis serogroup A / serotype 4A (strain DSM 15465 / Z2491) protein is Protein SlyX homolog.